Reading from the N-terminus, the 224-residue chain is Ribosome maturation factor RimM (224 aa).

Residues 1–12 (MARRPGSSSRGP) show a composition bias toward low complexity. 2 disordered regions span residues 1–46 (MARR…PSLV) and 204–224 (VADP…DDPG). The region spanning 137 to 211 (EDEFFLTDLI…KVVADPPEDL (75 aa)) is the PRC barrel domain.

This sequence belongs to the RimM family. Binds ribosomal protein uS19.

The protein localises to the cytoplasm. Its function is as follows. An accessory protein needed during the final step in the assembly of 30S ribosomal subunit, possibly for assembly of the head region. Essential for efficient processing of 16S rRNA. May be needed both before and after RbfA during the maturation of 16S rRNA. It has affinity for free ribosomal 30S subunits but not for 70S ribosomes. This is Ribosome maturation factor RimM from Methylorubrum populi (strain ATCC BAA-705 / NCIMB 13946 / BJ001) (Methylobacterium populi).